Reading from the N-terminus, the 563-residue chain is Protein disulfide isomerase-like 1-4 (563 aa).

Positions 1–22 (MRSRSLLLVALATLLLHASASA) are cleaved as a signal peptide. The disordered stretch occupies residues 40 to 64 (NDPDGWLQEGSPDDDDDDDLFHHGQ). The Thioredoxin 1 domain occupies 46–180 (LQEGSPDDDD…IVSWVNKKLA (135 aa)). N82 is a glycosylation site (N-linked (GlcNAc...) asparagine). Residues C102 and C105 each act as nucleophile in the active site. C102 and C105 form a disulfide bridge. N-linked (GlcNAc...) asparagine glycans are attached at residues N185 and N315. The 130-residue stretch at 394–523 (FLEEKLTPFY…MYKFIKKHAS (130 aa)) folds into the Thioredoxin 2 domain. Catalysis depends on nucleophile residues C444 and C447. Residues C444 and C447 are joined by a disulfide bond. Over residues 529-542 (KRPDSSATKTEKDQ) the composition is skewed to basic and acidic residues. The interval 529-563 (KRPDSSATKTEKDQSTASTNLRGERSSGTNFKDEL) is disordered. The span at 543-563 (STASTNLRGERSSGTNFKDEL) shows a compositional bias: polar residues. Residues 560 to 563 (KDEL) carry the Prevents secretion from ER motif.

Belongs to the protein disulfide isomerase family.

It localises to the endoplasmic reticulum lumen. It catalyses the reaction Catalyzes the rearrangement of -S-S- bonds in proteins.. In terms of biological role, acts as a protein-folding catalyst that interacts with nascent polypeptides to catalyze the formation, isomerization, and reduction or oxidation of disulfide bonds. May play a role in storage protein biogenesis. This is Protein disulfide isomerase-like 1-4 (PDIL1-4) from Oryza sativa subsp. japonica (Rice).